A 631-amino-acid chain; its full sequence is Phosphomethylpyrimidine synthase (631 aa).

Substrate is bound by residues Asn239, Met268, Tyr297, His333, 353-355 (SRG), 394-397 (DGLR), and Glu433. Residue His437 participates in Zn(2+) binding. A substrate-binding site is contributed by Tyr460. His501 is a binding site for Zn(2+). Cys581, Cys584, and Cys589 together coordinate [4Fe-4S] cluster.

The protein belongs to the ThiC family. As to quaternary structure, homodimer. [4Fe-4S] cluster serves as cofactor.

The catalysed reaction is 5-amino-1-(5-phospho-beta-D-ribosyl)imidazole + S-adenosyl-L-methionine = 4-amino-2-methyl-5-(phosphooxymethyl)pyrimidine + CO + 5'-deoxyadenosine + formate + L-methionine + 3 H(+). The protein operates within cofactor biosynthesis; thiamine diphosphate biosynthesis. Functionally, catalyzes the synthesis of the hydroxymethylpyrimidine phosphate (HMP-P) moiety of thiamine from aminoimidazole ribotide (AIR) in a radical S-adenosyl-L-methionine (SAM)-dependent reaction. This chain is Phosphomethylpyrimidine synthase, found in Escherichia coli O8 (strain IAI1).